Consider the following 269-residue polypeptide: UPF0494 membrane protein C1348.01 (269 aa).

Helical transmembrane passes span 107-127, 144-164, 177-197, and 201-221; these read WPLL…KFEV, IWVP…SLIF, GVII…IAAL, and ITGL…LSLG.

The protein belongs to the UPF0494 family.

The protein localises to the vacuole membrane. This is UPF0494 membrane protein C1348.01 from Schizosaccharomyces pombe (strain 972 / ATCC 24843) (Fission yeast).